Reading from the N-terminus, the 518-residue chain is Glutamate--cysteine ligase (518 aa).

The protein belongs to the glutamate--cysteine ligase type 1 family. Type 1 subfamily.

It carries out the reaction L-cysteine + L-glutamate + ATP = gamma-L-glutamyl-L-cysteine + ADP + phosphate + H(+). The protein operates within sulfur metabolism; glutathione biosynthesis; glutathione from L-cysteine and L-glutamate: step 1/2. The polypeptide is Glutamate--cysteine ligase (Shigella flexneri serotype 5b (strain 8401)).